A 98-amino-acid polypeptide reads, in one-letter code: Signal peptidase complex subunit 1 (98 aa).

At 1–18 (MLDIQTHMDFAGQGKAER) the chain is on the cytoplasmic side. A helical transmembrane segment spans residues 19–38 (WSRFIITFFGIVGLVYGAFV). The Lumenal segment spans residues 39–42 (QQFS). Residues 43–65 (QTVYILGAGFVLSSLITIPPWPL) form a helical membrane-spanning segment. The Cytoplasmic portion of the chain corresponds to 66-98 (YRRNALKWQKPIDTDAKSSSSESGDEGKKKKKQ). The disordered stretch occupies residues 78–98 (DTDAKSSSSESGDEGKKKKKQ). 4 positions are modified to phosphoserine: S84, S85, S86, and S88.

Belongs to the SPCS1 family. Component of the signal peptidase complex (SPC) composed of a catalytic subunit twr/SEC11 and three accessory subunits Spase12/SPCS1, Spase25/SPCS2 and Spase22-23/SPCS3. The complex induces a local thinning of the ER membrane which is used to measure the length of the signal peptide (SP) h-region of protein substrates. This ensures the selectivity of the complex towards h-regions shorter than 18-20 amino acids.

Its subcellular location is the endoplasmic reticulum membrane. Its function is as follows. Component of the signal peptidase complex (SPC) which catalyzes the cleavage of N-terminal signal sequences from nascent proteins as they are translocated into the lumen of the endoplasmic reticulum. Dispensable for SPC enzymatic activity. Functionally, (Microbial infection) Plays an important role in infection by flaviviruses such as West Nile virus and Dengue virus type 2. This chain is Signal peptidase complex subunit 1 (Spase12), found in Drosophila melanogaster (Fruit fly).